The sequence spans 157 residues: 2-C-methyl-D-erythritol 2,4-cyclodiphosphate synthase (157 aa).

2 residues coordinate a divalent metal cation: D8 and H10. Residues 8-10 (DVH) and 34-35 (HS) each bind 4-CDP-2-C-methyl-D-erythritol 2-phosphate. An a divalent metal cation-binding site is contributed by H42. 4-CDP-2-C-methyl-D-erythritol 2-phosphate-binding positions include 56–58 (DIG), 61–65 (FPDTD), 100–106 (AQAPKMA), 132–135 (TTTE), F139, and R142.

This sequence belongs to the IspF family. In terms of assembly, homotrimer. Requires a divalent metal cation as cofactor.

The catalysed reaction is 4-CDP-2-C-methyl-D-erythritol 2-phosphate = 2-C-methyl-D-erythritol 2,4-cyclic diphosphate + CMP. It functions in the pathway isoprenoid biosynthesis; isopentenyl diphosphate biosynthesis via DXP pathway; isopentenyl diphosphate from 1-deoxy-D-xylulose 5-phosphate: step 4/6. Its function is as follows. Involved in the biosynthesis of isopentenyl diphosphate (IPP) and dimethylallyl diphosphate (DMAPP), two major building blocks of isoprenoid compounds. Catalyzes the conversion of 4-diphosphocytidyl-2-C-methyl-D-erythritol 2-phosphate (CDP-ME2P) to 2-C-methyl-D-erythritol 2,4-cyclodiphosphate (ME-CPP) with a corresponding release of cytidine 5-monophosphate (CMP). The polypeptide is 2-C-methyl-D-erythritol 2,4-cyclodiphosphate synthase (Stutzerimonas stutzeri (strain A1501) (Pseudomonas stutzeri)).